A 331-amino-acid polypeptide reads, in one-letter code: Anthranilate phosphoribosyltransferase (331 aa).

Residues G79, 82-83 (GD), T87, 89-92 (NIST), 107-115 (KHGNYGATS), and A119 contribute to the 5-phospho-alpha-D-ribose 1-diphosphate site. G79 serves as a coordination point for anthranilate. Position 91 (S91) interacts with Mg(2+). N110 is an anthranilate binding site. Residue R165 participates in anthranilate binding. Mg(2+) contacts are provided by D223 and E224.

It belongs to the anthranilate phosphoribosyltransferase family. Homodimer. The cofactor is Mg(2+).

It carries out the reaction N-(5-phospho-beta-D-ribosyl)anthranilate + diphosphate = 5-phospho-alpha-D-ribose 1-diphosphate + anthranilate. It participates in amino-acid biosynthesis; L-tryptophan biosynthesis; L-tryptophan from chorismate: step 2/5. Its function is as follows. Catalyzes the transfer of the phosphoribosyl group of 5-phosphorylribose-1-pyrophosphate (PRPP) to anthranilate to yield N-(5'-phosphoribosyl)-anthranilate (PRA). This is Anthranilate phosphoribosyltransferase from Bacteroides fragilis (strain YCH46).